A 207-amino-acid chain; its full sequence is Large ribosomal subunit protein uL4 (207 aa).

The interval 48-86 (THKVKNRSEVRGGGRKPWRQKGTGRARQGSIRSPQWRGG) is disordered. A compositionally biased stretch (basic residues) spans 60–71 (GGRKPWRQKGTG).

The protein belongs to the universal ribosomal protein uL4 family. In terms of assembly, part of the 50S ribosomal subunit.

In terms of biological role, one of the primary rRNA binding proteins, this protein initially binds near the 5'-end of the 23S rRNA. It is important during the early stages of 50S assembly. It makes multiple contacts with different domains of the 23S rRNA in the assembled 50S subunit and ribosome. Forms part of the polypeptide exit tunnel. The polypeptide is Large ribosomal subunit protein uL4 (Bacillus licheniformis (strain ATCC 14580 / DSM 13 / JCM 2505 / CCUG 7422 / NBRC 12200 / NCIMB 9375 / NCTC 10341 / NRRL NRS-1264 / Gibson 46)).